Consider the following 110-residue polypeptide: Acid stress chaperone HdeA (110 aa).

Positions 1-21 (MKKVLGVILGGLLLLPVVSNA) are cleaved as a signal peptide. Cysteine 39 and cysteine 87 are disulfide-bonded.

Belongs to the HdeA family.

It localises to the periplasm. Functionally, required for optimal acid stress protection. Exhibits a chaperone-like activity only at low pH by suppressing non-specifically the aggregation of denaturated periplasmic proteins. This chain is Acid stress chaperone HdeA, found in Escherichia coli O157:H7.